The primary structure comprises 373 residues: MASQKPNLAALSAAGVSVWLDDLSRDRLRSGNLQELIDTKSVVGVTTNPSIFQKALSEGHDYDAQVAELAERGADVDATIRTVTTDDVRNACDVLAPRWEASGGVDGRVSIEVDPRLAHETDKTIQQAVELWKIVDRPNLLIKIPATKAGLPAIAAVLAEGISVNVTLIFSVDRHRGVMDAYLTGMEKAAQAGHDLSKIHSVASFFVSRVDTEIDNRLEQIGSAEALALRGQAGVANARLAYAAYQEVFEGDARYQALKERGARVQRPLWASTGVKNPDYSDTLYVTELVAPHTVNTMPEKTLDAVADHGVVKGDSITGTSGDAQQVFDKLEAIGIDLSDVFDVLESEGVEKFEASWKELLDATQAQLDALAK.

Lys143 (schiff-base intermediate with substrate) is an active-site residue.

The protein belongs to the transaldolase family. Type 2 subfamily.

Its subcellular location is the cytoplasm. It carries out the reaction D-sedoheptulose 7-phosphate + D-glyceraldehyde 3-phosphate = D-erythrose 4-phosphate + beta-D-fructose 6-phosphate. It functions in the pathway carbohydrate degradation; pentose phosphate pathway; D-glyceraldehyde 3-phosphate and beta-D-fructose 6-phosphate from D-ribose 5-phosphate and D-xylulose 5-phosphate (non-oxidative stage): step 2/3. In terms of biological role, transaldolase is important for the balance of metabolites in the pentose-phosphate pathway. The chain is Transaldolase from Mycobacterium ulcerans (strain Agy99).